The primary structure comprises 158 residues: SH3 domain-binding glutamic acid-rich protein homolog (158 aa).

A compositionally biased stretch (basic and acidic residues) spans 40–51; it reads TEPGKESEKELM. Residues 40–74 are disordered; the sequence is TEPGKESEKELMQNKSTSNGGTVSDPEPRHPLPPQ. Positions 52 to 61 are enriched in polar residues; the sequence is QNKSTSNGGT. Residues 67 to 73 carry the SH3-binding motif; that stretch reads PRHPLPP. A Phosphothreonine modification is found at Thr-109. A disordered region spans residues 118-158; the sequence is LKQENGDAKKEEAETEAEDKKTEAGDGDVDVKEEAAEKAEV.

This sequence belongs to the SH3BGR family.

This Drosophila melanogaster (Fruit fly) protein is SH3 domain-binding glutamic acid-rich protein homolog (Sh3beta).